Here is a 553-residue protein sequence, read N- to C-terminus: HTH-type transcriptional regulator SgrR (553 aa).

The region spanning 1–113 (MSTSRLQQQF…RQMLLSQLGR (113 aa)) is the HTH marR-type domain. A DNA-binding region (H-T-H motif) is located at residues 26 to 49 (LQALAEVLNCSRRHVRSLLGKMQH). The interval 163–494 (ELEPDLSHHW…EELHQDIESW (332 aa)) is solute-binding.

Its function is as follows. Activates the small RNA gene sgrS under glucose-phosphate stress conditions as well as yfdZ. Represses its own transcription under both stress and non-stress conditions. Might act as a sensor of the intracellular accumulation of phosphoglucose by binding these molecules in its C-terminal solute-binding domain. The protein is HTH-type transcriptional regulator SgrR of Yersinia pseudotuberculosis serotype I (strain IP32953).